Here is a 376-residue protein sequence, read N- to C-terminus: 23S rRNA (uracil(747)-C(5))-methyltransferase RlmC (376 aa).

Positions 3, 11, 14, and 87 each coordinate [4Fe-4S] cluster. S-adenosyl-L-methionine contacts are provided by Q212, F241, E262, and N307. The Nucleophile role is filled by C334.

The protein belongs to the class I-like SAM-binding methyltransferase superfamily. RNA M5U methyltransferase family. RlmC subfamily.

It carries out the reaction uridine(747) in 23S rRNA + S-adenosyl-L-methionine = 5-methyluridine(747) in 23S rRNA + S-adenosyl-L-homocysteine + H(+). Functionally, catalyzes the formation of 5-methyl-uridine at position 747 (m5U747) in 23S rRNA. The sequence is that of 23S rRNA (uracil(747)-C(5))-methyltransferase RlmC from Salmonella typhimurium (strain LT2 / SGSC1412 / ATCC 700720).